Reading from the N-terminus, the 93-residue chain is Regulatory protein RepI (93 aa).

Its function is as follows. This protein is involved in regulating the plasmid copy-number. Increasing the level of this protein results in a higher plasmid copy-number. The sequence is that of Regulatory protein RepI (repI) from Escherichia coli.